Reading from the N-terminus, the 37-residue chain is Desulforedoxin (37 aa).

Residues Cys-10, Cys-13, Cys-29, and Cys-30 each contribute to the Fe cation site.

It to the N-terminal section of desulfoferrodoxin. In terms of assembly, homodimer. Fe cation is required as a cofactor.

Its function is as follows. Nonheme iron protein possibly involved in electron transport. The chain is Desulforedoxin (dsr) from Megalodesulfovibrio gigas (Desulfovibrio gigas).